The primary structure comprises 273 residues: Nitrogenase iron protein (273 aa).

An ATP-binding site is contributed by 8-15 (GKGGIGKS). Cys95 contacts [4Fe-4S] cluster. An ADP-ribosylarginine; by dinitrogenase reductase ADP-ribosyltransferase modification is found at Arg98. Position 130 (Cys130) interacts with [4Fe-4S] cluster.

Belongs to the NifH/BchL/ChlL family. Homodimer. [4Fe-4S] cluster serves as cofactor. In terms of processing, the reversible ADP-ribosylation of Arg-98 inactivates the nitrogenase reductase and regulates nitrogenase activity.

The enzyme catalyses N2 + 8 reduced [2Fe-2S]-[ferredoxin] + 16 ATP + 16 H2O = H2 + 8 oxidized [2Fe-2S]-[ferredoxin] + 2 NH4(+) + 16 ADP + 16 phosphate + 6 H(+). Functionally, the key enzymatic reactions in nitrogen fixation are catalyzed by the nitrogenase complex, which has 2 components: the iron protein and the molybdenum-iron protein. The sequence is that of Nitrogenase iron protein from Methanosarcina mazei (strain ATCC BAA-159 / DSM 3647 / Goe1 / Go1 / JCM 11833 / OCM 88) (Methanosarcina frisia).